The primary structure comprises 201 residues: Translation machinery-associated protein 22 (201 aa).

One can recognise an SUI1 domain in the interval 104–175 (VTVKRIERNK…EIKEFIVEKY (72 aa)).

This sequence belongs to the DENR family. As to quaternary structure, interacts with the 40S ribosomal subunit.

Its subcellular location is the cytoplasm. The polypeptide is Translation machinery-associated protein 22 (TMA22) (Pyricularia oryzae (strain 70-15 / ATCC MYA-4617 / FGSC 8958) (Rice blast fungus)).